The primary structure comprises 382 residues: Ribosomal RNA large subunit methyltransferase G (382 aa).

The protein belongs to the methyltransferase superfamily. RlmG family.

It is found in the cytoplasm. The catalysed reaction is guanosine(1835) in 23S rRNA + S-adenosyl-L-methionine = N(2)-methylguanosine(1835) in 23S rRNA + S-adenosyl-L-homocysteine + H(+). In terms of biological role, specifically methylates the guanine in position 1835 (m2G1835) of 23S rRNA. This is Ribosomal RNA large subunit methyltransferase G from Aliivibrio fischeri (strain ATCC 700601 / ES114) (Vibrio fischeri).